The sequence spans 186 residues: Adenine phosphoribosyltransferase (186 aa).

It belongs to the purine/pyrimidine phosphoribosyltransferase family. In terms of assembly, homodimer.

Its subcellular location is the cytoplasm. The enzyme catalyses AMP + diphosphate = 5-phospho-alpha-D-ribose 1-diphosphate + adenine. It participates in purine metabolism; AMP biosynthesis via salvage pathway; AMP from adenine: step 1/1. Catalyzes a salvage reaction resulting in the formation of AMP, that is energically less costly than de novo synthesis. The protein is Adenine phosphoribosyltransferase of Xanthomonas oryzae pv. oryzae (strain PXO99A).